Consider the following 140-residue polypeptide: MSMKYLMLLFAAMIIRSFADSGNAIETTLPEITNATTDIPAIRLCGPEGDGYCLHGDCIHARDIDGMYCRCSHGYTGIRCQHVVLVDYQRSENPNTTTSYIPSPGIVLVLVGIIIITCCSLSVYRFTRRTKLPIQDMVVP.

A signal peptide spans 1–18 (MSMKYLMLLFAAMIIRSF). Residues 19–100 (ADSGNAIETT…SENPNTTTSY (82 aa)) are Extracellular-facing. N34 carries an N-linked (GlcNAc...) asparagine; by host glycan. The region spanning 41 to 81 (AIRLCGPEGDGYCLHGDCIHARDIDGMYCRCSHGYTGIRCQ) is the EGF-like domain. Cystine bridges form between C45-C58, C53-C69, and C71-C80. Residue N95 is glycosylated (N-linked (GlcNAc...) asparagine; by host). The helical transmembrane segment at 101–121 (IPSPGIVLVLVGIIIITCCSL) threads the bilayer. The Cytoplasmic segment spans residues 122 to 140 (SVYRFTRRTKLPIQDMVVP).

This sequence belongs to the orthopoxvirus OPG019 family. As to quaternary structure, vaccinia growth factor interacts with host EGFR and promotes EGFR dimerization.

The protein localises to the host membrane. Its subcellular location is the secreted. In terms of biological role, stimulates cellular proliferation (hyperplasia)and mobility around infected cells to promote rapid and efficient spread of infection. This effect is beneficial for virus replication in vivo, because poxviruses replicate possibly better in proliferating cells than in quiescent cells. Acts by binding host EGFR, inducing its dimerization, autophosphorylation and leading to activation of several cellular pathways regulating cell proliferation or cell survival. The activation by host EGFR of mitogen activated protein kinases (MAPK) and extracellular-signal regulated kinases (ERK) are essential for the positive effect of vaccinia growth factor on poxvirus virulence in vivo. This is Pro-vaccinia growth factor (OPG019) from Vaccinia virus (strain L-IVP) (VACV).